Here is a 120-residue protein sequence, read N- to C-terminus: UPF0715 membrane protein YwlA (120 aa).

The next 4 membrane-spanning stretches (helical) occupy residues 3 to 23 (YNYT…VIYI), 26 to 46 (FIIA…LIFA), 63 to 83 (LYLL…FGML), and 95 to 115 (AFYL…SVLL).

This sequence belongs to the UPF0715 family.

The protein resides in the cell membrane. This is UPF0715 membrane protein YwlA (ywlA) from Bacillus subtilis (strain 168).